The following is a 180-amino-acid chain: Acireductone dioxygenase (180 aa).

Positions 97, 99, 103, and 141 each coordinate Fe(2+). Residues H97, H99, E103, and H141 each coordinate Ni(2+).

This sequence belongs to the acireductone dioxygenase (ARD) family. In terms of assembly, monomer. It depends on Fe(2+) as a cofactor. Ni(2+) is required as a cofactor.

The catalysed reaction is 1,2-dihydroxy-5-(methylsulfanyl)pent-1-en-3-one + O2 = 3-(methylsulfanyl)propanoate + CO + formate + 2 H(+). It carries out the reaction 1,2-dihydroxy-5-(methylsulfanyl)pent-1-en-3-one + O2 = 4-methylsulfanyl-2-oxobutanoate + formate + 2 H(+). The protein operates within amino-acid biosynthesis; L-methionine biosynthesis via salvage pathway; L-methionine from S-methyl-5-thio-alpha-D-ribose 1-phosphate: step 5/6. Its function is as follows. Catalyzes 2 different reactions between oxygen and the acireductone 1,2-dihydroxy-3-keto-5-methylthiopentene (DHK-MTPene) depending upon the metal bound in the active site. Fe-containing acireductone dioxygenase (Fe-ARD) produces formate and 2-keto-4-methylthiobutyrate (KMTB), the alpha-ketoacid precursor of methionine in the methionine recycle pathway. Ni-containing acireductone dioxygenase (Ni-ARD) produces methylthiopropionate, carbon monoxide and formate, and does not lie on the methionine recycle pathway. This is Acireductone dioxygenase from Acidiphilium cryptum (strain JF-5).